Here is a 943-residue protein sequence, read N- to C-terminus: Isoleucine--tRNA ligase (943 aa).

A 'HIGH' region motif is present at residues 59 to 69 (PYANGRIHLGH). Glu577 is an L-isoleucyl-5'-AMP binding site. A 'KMSKS' region motif is present at residues 618–622 (KMSKS). Lys621 contributes to the ATP binding site. Zn(2+) contacts are provided by Cys906, Cys909, Cys926, and Cys929.

It belongs to the class-I aminoacyl-tRNA synthetase family. IleS type 1 subfamily. As to quaternary structure, monomer. The cofactor is Zn(2+).

Its subcellular location is the cytoplasm. It carries out the reaction tRNA(Ile) + L-isoleucine + ATP = L-isoleucyl-tRNA(Ile) + AMP + diphosphate. Functionally, catalyzes the attachment of isoleucine to tRNA(Ile). As IleRS can inadvertently accommodate and process structurally similar amino acids such as valine, to avoid such errors it has two additional distinct tRNA(Ile)-dependent editing activities. One activity is designated as 'pretransfer' editing and involves the hydrolysis of activated Val-AMP. The other activity is designated 'posttransfer' editing and involves deacylation of mischarged Val-tRNA(Ile). The polypeptide is Isoleucine--tRNA ligase (Stenotrophomonas maltophilia (strain R551-3)).